The sequence spans 228 residues: MNKFISIIALCVFSSYANAAFTLNSTRYIYNEGQQSVSVNIHNESEHKYGGQVWIDNIDKNGEVVFFSPSPMVFKLNPKQKQIVRIVNINDNLPKDRESIFWLNVQEIPPAPKGDGGSLSLAINNRVKLIYRPIALKNGRDEAENNIKLINSGTDSCLENTTPYYFAISDVKINGKSIDLNSDAKNKMGVFSPFSKVCLGNVNTSGNITVTAFNDYGVATSYTVQRSK.

A signal peptide spans 1–19 (MNKFISIIALCVFSSYANA). A disulfide bridge links Cys-157 with Cys-198.

Belongs to the periplasmic pilus chaperone family.

The protein localises to the periplasm. In terms of biological role, mediates assembly of pili by forming soluble multimeric complexes with pili subunits as an intermediate step in the assembly process. This protein is involved in K99 pili assembly. This is Chaperone protein FanE (fanE) from Escherichia coli.